We begin with the raw amino-acid sequence, 279 residues long: 2-dehydro-3-deoxyphosphooctonate aldolase (279 aa).

Belongs to the KdsA family.

It is found in the cytoplasm. It catalyses the reaction D-arabinose 5-phosphate + phosphoenolpyruvate + H2O = 3-deoxy-alpha-D-manno-2-octulosonate-8-phosphate + phosphate. It participates in carbohydrate biosynthesis; 3-deoxy-D-manno-octulosonate biosynthesis; 3-deoxy-D-manno-octulosonate from D-ribulose 5-phosphate: step 2/3. The protein operates within bacterial outer membrane biogenesis; lipopolysaccharide biosynthesis. This Methylobacillus flagellatus (strain ATCC 51484 / DSM 6875 / VKM B-1610 / KT) protein is 2-dehydro-3-deoxyphosphooctonate aldolase.